A 120-amino-acid chain; its full sequence is uncharacterized protein (120 aa).

Residues 80–99 (PTRKLQTPLNEPPRTWRKTA) form a disordered region.

This is an uncharacterized protein from Goose circovirus (GoCV).